Reading from the N-terminus, the 236-residue chain is Demethylmenaquinone methyltransferase (236 aa).

Residues Thr-58, Asp-79, and 106–107 (NA) each bind S-adenosyl-L-methionine.

This sequence belongs to the class I-like SAM-binding methyltransferase superfamily. MenG/UbiE family.

It catalyses the reaction a 2-demethylmenaquinol + S-adenosyl-L-methionine = a menaquinol + S-adenosyl-L-homocysteine + H(+). The protein operates within quinol/quinone metabolism; menaquinone biosynthesis; menaquinol from 1,4-dihydroxy-2-naphthoate: step 2/2. In terms of biological role, methyltransferase required for the conversion of demethylmenaquinol (DMKH2) to menaquinol (MKH2). In Alkalihalophilus pseudofirmus (strain ATCC BAA-2126 / JCM 17055 / OF4) (Bacillus pseudofirmus), this protein is Demethylmenaquinone methyltransferase.